We begin with the raw amino-acid sequence, 555 residues long: Formate--tetrahydrofolate ligase (555 aa).

65–72 serves as a coordination point for ATP; that stretch reads TPAGEGKS.

Belongs to the formate--tetrahydrofolate ligase family.

The catalysed reaction is (6S)-5,6,7,8-tetrahydrofolate + formate + ATP = (6R)-10-formyltetrahydrofolate + ADP + phosphate. It functions in the pathway one-carbon metabolism; tetrahydrofolate interconversion. This Staphylococcus aureus (strain MRSA252) protein is Formate--tetrahydrofolate ligase.